Consider the following 289-residue polypeptide: Shikimate dehydrogenase (NADP(+)) (289 aa).

Residues 19-21 (SLS) and Thr-66 each bind shikimate. Lys-70 serves as the catalytic Proton acceptor. Residues Asn-91 and Asp-106 each contribute to the shikimate site. Residues 131 to 135 (GNGGA) and Leu-229 each bind NADP(+). Shikimate is bound at residue Tyr-231. Gly-252 is an NADP(+) binding site.

Belongs to the shikimate dehydrogenase family. As to quaternary structure, homodimer.

It carries out the reaction shikimate + NADP(+) = 3-dehydroshikimate + NADPH + H(+). Its pathway is metabolic intermediate biosynthesis; chorismate biosynthesis; chorismate from D-erythrose 4-phosphate and phosphoenolpyruvate: step 4/7. Involved in the biosynthesis of the chorismate, which leads to the biosynthesis of aromatic amino acids. Catalyzes the reversible NADPH linked reduction of 3-dehydroshikimate (DHSA) to yield shikimate (SA). This chain is Shikimate dehydrogenase (NADP(+)), found in Trichormus variabilis (strain ATCC 29413 / PCC 7937) (Anabaena variabilis).